The following is a 180-amino-acid chain: Centromere protein M (180 aa).

In terms of assembly, component of the CENPA-NAC complex, at least composed of CENPA, CENPC, CENPH, CENPM, CENPN, CENPT and CENPU. The CENPA-NAC complex interacts with the CENPA-CAD complex, composed of CENPI, CENPK, CENPL, CENPO, CENPP, CENPQ, CENPR and CENPS. As to expression, isoform 3 is highly expressed in spleen, and intermediately in heart, prostate and ovary. Isoform 3 is highly expressed in resting CD19 B-cells and B-lineage chronic lymphocytic leukemia (B-CLL) cells and weakly expressed in activated B-cells. Isoform 1 is selectively expressed in activated CD19 cells and weakly in resting CD19 B-cells.

The protein resides in the nucleus. The protein localises to the cytoplasm. It is found in the chromosome. Its subcellular location is the centromere. It localises to the kinetochore. Functionally, component of the CENPA-NAC (nucleosome-associated) complex, a complex that plays a central role in assembly of kinetochore proteins, mitotic progression and chromosome segregation. The CENPA-NAC complex recruits the CENPA-CAD (nucleosome distal) complex and may be involved in incorporation of newly synthesized CENPA into centromeres. The polypeptide is Centromere protein M (CENPM) (Homo sapiens (Human)).